A 691-amino-acid chain; its full sequence is Elongation factor G (691 aa).

The tr-type G domain maps to Lys8–Asp283. Residues Ala17–Thr24, Asp81–His85, and Asn135–Asp138 each bind GTP.

The protein belongs to the TRAFAC class translation factor GTPase superfamily. Classic translation factor GTPase family. EF-G/EF-2 subfamily.

It localises to the cytoplasm. Functionally, catalyzes the GTP-dependent ribosomal translocation step during translation elongation. During this step, the ribosome changes from the pre-translocational (PRE) to the post-translocational (POST) state as the newly formed A-site-bound peptidyl-tRNA and P-site-bound deacylated tRNA move to the P and E sites, respectively. Catalyzes the coordinated movement of the two tRNA molecules, the mRNA and conformational changes in the ribosome. This chain is Elongation factor G, found in Campylobacter jejuni subsp. jejuni serotype O:23/36 (strain 81-176).